The chain runs to 344 residues: Arginine N-succinyltransferase (344 aa).

Succinyl-CoA is bound at residue Leu125. His229 acts as the Proton donor in catalysis.

It belongs to the arginine N-succinyltransferase family.

The catalysed reaction is succinyl-CoA + L-arginine = N(2)-succinyl-L-arginine + CoA + H(+). It participates in amino-acid degradation; L-arginine degradation via AST pathway; L-glutamate and succinate from L-arginine: step 1/5. Functionally, catalyzes the transfer of succinyl-CoA to arginine to produce N(2)-succinylarginine. The protein is Arginine N-succinyltransferase of Shigella dysenteriae serotype 1 (strain Sd197).